The following is a 169-amino-acid chain: Small ribosomal subunit protein uS5 (169 aa).

The region spanning 14–77 (LDDQVVAINR…AAAEKNLITV (64 aa)) is the S5 DRBM domain.

This sequence belongs to the universal ribosomal protein uS5 family. In terms of assembly, part of the 30S ribosomal subunit. Contacts proteins S4 and S8.

In terms of biological role, with S4 and S12 plays an important role in translational accuracy. Its function is as follows. Located at the back of the 30S subunit body where it stabilizes the conformation of the head with respect to the body. The protein is Small ribosomal subunit protein uS5 of Limosilactobacillus reuteri (strain DSM 20016) (Lactobacillus reuteri).